We begin with the raw amino-acid sequence, 488 residues long: MKLTKLLTYLKNVPSYAGQEDPDITSIEMDSREVKTGSLFVCIKGYTVDGHDYARQAAEKGAAAIVAEREVDADVPVIIIRHTKRALAVLSDAFYGQPTKQLRLIGITGTNGKTSTSHMVEEIFRKAGSRTGLIGTMYTKIHDETFEAKNTTPESVTLQKTFRKMVDQGVDTAVMEVSSHALHMGRVHGCDYDIAAFTNLTQDHLDYHETMEEYKHAKSLLFSQLGGSFNHETPKWAVLNADDPASAYFAQVTSAHLLTYGIQNDADVMAENIKMAPKGTTFDLVTPKGSAQVTIPLVGLFNVYNVLTAAAIAIAADIPFATITEGIEGLKGVRGRFELVDAGQDFPVIVDYAHTPDSLENVLNTCRGLTEGKLFVVVGCGGDRDKTKRPKMAKIAVDLADEPVFTADNPRSENPLAILNDMEEGVKGAYYHSIVNREQAIFFAIANAKKGDVVLIAGKGHETYQQIGGQTFDFDDAEVAKRAILELK.

Ser-31 serves as a coordination point for UDP-N-acetyl-alpha-D-muramoyl-L-alanyl-D-glutamate. 109 to 115 lines the ATP pocket; it reads GTNGKTS. Residues Asn-150, 151 to 152, Ser-178, and Arg-186 contribute to the UDP-N-acetyl-alpha-D-muramoyl-L-alanyl-D-glutamate site; that span reads TT. Lys-218 is subject to N6-carboxylysine. Residues Arg-384, 408-411, Gly-458, and Glu-462 contribute to the meso-2,6-diaminopimelate site; that span reads DNPR. Residues 408–411 carry the Meso-diaminopimelate recognition motif motif; that stretch reads DNPR.

Belongs to the MurCDEF family. MurE subfamily. Mg(2+) serves as cofactor. Carboxylation is probably crucial for Mg(2+) binding and, consequently, for the gamma-phosphate positioning of ATP.

The protein resides in the cytoplasm. The enzyme catalyses UDP-N-acetyl-alpha-D-muramoyl-L-alanyl-D-glutamate + meso-2,6-diaminopimelate + ATP = UDP-N-acetyl-alpha-D-muramoyl-L-alanyl-gamma-D-glutamyl-meso-2,6-diaminopimelate + ADP + phosphate + H(+). Its pathway is cell wall biogenesis; peptidoglycan biosynthesis. Catalyzes the addition of meso-diaminopimelic acid to the nucleotide precursor UDP-N-acetylmuramoyl-L-alanyl-D-glutamate (UMAG) in the biosynthesis of bacterial cell-wall peptidoglycan. The protein is UDP-N-acetylmuramoyl-L-alanyl-D-glutamate--2,6-diaminopimelate ligase of Bacillus licheniformis (strain ATCC 14580 / DSM 13 / JCM 2505 / CCUG 7422 / NBRC 12200 / NCIMB 9375 / NCTC 10341 / NRRL NRS-1264 / Gibson 46).